The following is a 213-amino-acid chain: BAG family molecular chaperone regulator 6, mitochondrial (213 aa).

The 30-residue stretch at 53–82 (DDAAAARIQAAFRGHLVRRHAAAVRGADDE) folds into the IQ domain. One can recognise a BAG domain in the interval 75–152 (AVRGADDEAT…GLQEVFDAVL (78 aa)).

Interacts with CAM1-1 under normal conditions. Dissociation of the interaction when calcium-CAM1-1 binding increases under saline-alkaline stress.

The protein resides in the mitochondrion. Co-chaperone that regulates stress responses. Acts as a negative regulator of saline-alkaline stress tolerance. May participate in stress response through regulating the homeostasis of iron, manganese and zinc ions. This is BAG family molecular chaperone regulator 6, mitochondrial from Oryza sativa subsp. japonica (Rice).